Reading from the N-terminus, the 210-residue chain is Redox-sensing transcriptional repressor Rex (210 aa).

A DNA-binding region (H-T-H motif) is located at residues 16-55 (IYSRFLKRLDKKGITTVSSGDIAEGVGVSPAQVRKDLAYF). An NAD(+)-binding site is contributed by 90-95 (GAGNLG).

It belongs to the transcriptional regulatory Rex family. Homodimer.

Its subcellular location is the cytoplasm. Functionally, modulates transcription in response to changes in cellular NADH/NAD(+) redox state. The protein is Redox-sensing transcriptional repressor Rex of Desulforamulus reducens (strain ATCC BAA-1160 / DSM 100696 / MI-1) (Desulfotomaculum reducens).